A 159-amino-acid polypeptide reads, in one-letter code: Vesicle transport protein SFT2B (159 aa).

Met1 is subject to N-acetylmethionine. The Cytoplasmic portion of the chain corresponds to 1-36; that stretch reads MDKLKKVLSGQDTEDRSGLSEVVEASSLSWGTRIKG. The residue at position 9 (Ser9) is a Phosphoserine. Residues 37 to 57 form a helical membrane-spanning segment; sequence FIACFALGILCSVLGTLLLWV. Residues 58–63 lie on the Lumenal side of the membrane; sequence PRKGLG. The chain crosses the membrane as a helical span at residues 64-84; that stretch reads LFAVFYTLGNIMSIGSTVFLM. The Cytoplasmic portion of the chain corresponds to 85-98; it reads GPLKQLKRMFEPTR. The chain crosses the membrane as a helical span at residues 99–119; that stretch reads LIATILVLLCFALTLCSAFLW. Over 120 to 122 the chain is Lumenal; sequence NKG. A helical transmembrane segment spans residues 123–143; sequence LALIFCILQSLALTWYSLSYI. Residues 144 to 159 lie on the Cytoplasmic side of the membrane; sequence PYARDAVKKCFAVCLA.

This sequence belongs to the SFT2 family.

It is found in the membrane. Functionally, may be involved in fusion of retrograde transport vesicles derived from an endocytic compartment with the Golgi complex. This is Vesicle transport protein SFT2B from Mus musculus (Mouse).